A 755-amino-acid polypeptide reads, in one-letter code: Exocyst complex component 3 (755 aa).

Coiled-coil stretches lie at residues 34-62 (DQLD…AAIQ) and 618-649 (RAVM…QLRF). The residue at position 38 (lysine 38) is an N6-acetyllysine.

It belongs to the SEC6 family. The exocyst complex is composed of EXOC1, EXOC2, EXOC3, EXOC4, EXOC5, EXOC6, EXOC7 and EXOC8. Interacts with EXOC3L1. Interacts with BIRC6/bruce. Interacts with MYRIP. Interacts with SLC6A9. Widely expressed, with highest levels in kidney, followed by brain (at protein level).

Its subcellular location is the cytoplasm. It localises to the perinuclear region. It is found in the cell projection. The protein localises to the growth cone. The protein resides in the neuron projection. Its subcellular location is the midbody. It localises to the golgi apparatus. In terms of biological role, component of the exocyst complex involved in the docking of exocytic vesicles with fusion sites on the plasma membrane. In Rattus norvegicus (Rat), this protein is Exocyst complex component 3 (Exoc3).